The sequence spans 327 residues: Tagatose 1,6-diphosphate aldolase 2 (327 aa).

Belongs to the aldolase LacD family.

It carries out the reaction D-tagatofuranose 1,6-bisphosphate = D-glyceraldehyde 3-phosphate + dihydroxyacetone phosphate. The protein operates within carbohydrate metabolism; D-tagatose 6-phosphate degradation; D-glyceraldehyde 3-phosphate and glycerone phosphate from D-tagatose 6-phosphate: step 2/2. The protein is Tagatose 1,6-diphosphate aldolase 2 of Streptococcus pyogenes serotype M6 (strain ATCC BAA-946 / MGAS10394).